Here is a 200-residue protein sequence, read N- to C-terminus: Large ribosomal subunit protein bL25 (200 aa).

This sequence belongs to the bacterial ribosomal protein bL25 family. CTC subfamily. As to quaternary structure, part of the 50S ribosomal subunit; part of the 5S rRNA/L5/L18/L25 subcomplex. Contacts the 5S rRNA. Binds to the 5S rRNA independently of L5 and L18.

Its function is as follows. This is one of the proteins that binds to the 5S RNA in the ribosome where it forms part of the central protuberance. This is Large ribosomal subunit protein bL25 from Nocardia farcinica (strain IFM 10152).